The following is a 358-amino-acid chain: Alanine racemase (358 aa).

The Proton acceptor; specific for D-alanine role is filled by Lys34. At Lys34 the chain carries N6-(pyridoxal phosphate)lysine. Arg130 provides a ligand contact to substrate. Residue Tyr254 is the Proton acceptor; specific for L-alanine of the active site. Met302 lines the substrate pocket.

It belongs to the alanine racemase family. It depends on pyridoxal 5'-phosphate as a cofactor.

The enzyme catalyses L-alanine = D-alanine. Its pathway is amino-acid biosynthesis; D-alanine biosynthesis; D-alanine from L-alanine: step 1/1. Functionally, catalyzes the interconversion of L-alanine and D-alanine. May also act on other amino acids. The sequence is that of Alanine racemase (alr) from Stutzerimonas stutzeri (strain A1501) (Pseudomonas stutzeri).